A 622-amino-acid polypeptide reads, in one-letter code: Presenilin-A (622 aa).

Basic and acidic residues predominate over residues Met1–Lys16. Disordered stretches follow at residues Met1–Asn65 and Val132–Glu160. The Cytoplasmic portion of the chain corresponds to Met1–Ser168. Residues Ser21 to Asn62 are compositionally biased toward low complexity. A compositionally biased stretch (acidic residues) spans Asp147–Glu160. Residues Glu169 to Ile189 form a helical membrane-spanning segment. Over Arg190–Ser227 the chain is Lumenal. The chain crosses the membrane as a helical span at residues Val228 to Leu248. At Tyr249–Ser265 the chain is on the cytoplasmic side. A helical transmembrane segment spans residues Ile266 to Leu286. Topologically, residues Gly287–Asp289 are lumenal. A helical membrane pass occupies residues Tyr290–Trp310. A topological domain (cytoplasmic) is located at residue Tyr311. Residues Ser312–Phe332 form a helical membrane-spanning segment. The Lumenal segment spans residues Ser333–Trp341. The helical transmembrane segment at Gly342 to Leu362 threads the bilayer. Residue Asp351 is part of the active site. The Cytoplasmic portion of the chain corresponds to Arg363–Arg538. Residues Asn419–Ile477 form a disordered region. A compositionally biased stretch (low complexity) spans Glu432 to Ser466. The helical transmembrane segment at Leu539 to Ile559 threads the bilayer. Asp543 is an active-site residue. Over Thr560–Val562 the chain is Lumenal. Residues Phe563 to Phe583 traverse the membrane as a helical segment. The Cytoplasmic portion of the chain corresponds to Arg584 to Pro588. Positions Pro588–Leu590 match the PAL motif. The segment at residues Ala589 to Ile609 is an intramembrane region (helical). The Cytoplasmic segment spans residues Gln610–Val622.

This sequence belongs to the peptidase A22A family. Homodimer. Component of the gamma-secretase complex, a complex composed of a presenilin homodimer, nicastrin, aph1 and pen2.

It localises to the endoplasmic reticulum membrane. The protein localises to the golgi apparatus membrane. Its function is as follows. Probable catalytic subunit of the gamma-secretase complex, an endoprotease complex that catalyzes the intramembrane cleavage of integral membrane proteins such as Notch receptors. Requires the other members of the gamma-secretase complex to have a protease activity. This Dictyostelium discoideum (Social amoeba) protein is Presenilin-A (psenA).